Reading from the N-terminus, the 174-residue chain is Small ribosomal subunit protein uS7c (174 aa).

Belongs to the universal ribosomal protein uS7 family. In terms of assembly, part of the 30S ribosomal subunit.

The protein resides in the plastid. It localises to the chloroplast. One of the primary rRNA binding proteins, it binds directly to 16S rRNA where it nucleates assembly of the head domain of the 30S subunit. This Stigeoclonium helveticum (Green alga) protein is Small ribosomal subunit protein uS7c (rps7).